The chain runs to 101 residues: ATP-dependent Clp protease adapter protein ClpS (101 aa).

This sequence belongs to the ClpS family. Binds to the N-terminal domain of the chaperone ClpA.

In terms of biological role, involved in the modulation of the specificity of the ClpAP-mediated ATP-dependent protein degradation. In Corynebacterium jeikeium (strain K411), this protein is ATP-dependent Clp protease adapter protein ClpS.